The primary structure comprises 81 residues: UPF0180 protein YkuS (81 aa).

Belongs to the UPF0180 family.

The protein is UPF0180 protein YkuS (ykuS) of Bacillus subtilis (strain 168).